The following is a 307-amino-acid chain: Phosphate import ATP-binding protein PstB (307 aa).

Residues 1 to 30 are disordered; it reads MSETTYTTTEDTDDTNSTDSMVGTTTGETD. An ABC transporter domain is found at 48–302; that stretch reads LGVDDLDVYY…PQSERVEDYI (255 aa). Position 80–87 (80–87) interacts with ATP; it reads GPSGCGKS.

The protein belongs to the ABC transporter superfamily. Phosphate importer (TC 3.A.1.7) family. The complex is composed of two ATP-binding proteins (PstB), two transmembrane proteins (PstC and PstA) and a solute-binding protein (PstS).

The protein resides in the cell membrane. It catalyses the reaction phosphate(out) + ATP + H2O = ADP + 2 phosphate(in) + H(+). Its function is as follows. Part of the ABC transporter complex PstSACB involved in phosphate import. Responsible for energy coupling to the transport system. The protein is Phosphate import ATP-binding protein PstB of Haloquadratum walsbyi (strain DSM 16790 / HBSQ001).